The following is a 431-amino-acid chain: Glutamate-1-semialdehyde 2,1-aminomutase (431 aa).

Lysine 265 is modified (N6-(pyridoxal phosphate)lysine).

It belongs to the class-III pyridoxal-phosphate-dependent aminotransferase family. HemL subfamily. As to quaternary structure, homodimer. Pyridoxal 5'-phosphate serves as cofactor.

The protein localises to the cytoplasm. It carries out the reaction (S)-4-amino-5-oxopentanoate = 5-aminolevulinate. It participates in porphyrin-containing compound metabolism; protoporphyrin-IX biosynthesis; 5-aminolevulinate from L-glutamyl-tRNA(Glu): step 2/2. This Aliivibrio fischeri (strain ATCC 700601 / ES114) (Vibrio fischeri) protein is Glutamate-1-semialdehyde 2,1-aminomutase.